An 86-amino-acid polypeptide reads, in one-letter code: Probable oxaloacetate decarboxylase gamma chain 1 (86 aa).

The helical transmembrane segment at 11–33 (AATLMVTGMAVVFLFLTLLVYLV) threads the bilayer.

The protein belongs to the OadG family. In terms of assembly, heterotrimer of an alpha, a beta and a gamma subunit. It depends on Na(+) as a cofactor.

The protein localises to the cell membrane. The catalysed reaction is oxaloacetate + 2 Na(+)(in) + H(+) = pyruvate + 2 Na(+)(out) + CO2. In terms of biological role, catalyzes the decarboxylation of oxaloacetate coupled to Na(+) translocation. The protein is Probable oxaloacetate decarboxylase gamma chain 1 (oadG1) of Vibrio cholerae serotype O1 (strain ATCC 39315 / El Tor Inaba N16961).